Consider the following 889-residue polypeptide: Alanine--tRNA ligase (889 aa).

Residues His569, His573, Cys671, and His675 each contribute to the Zn(2+) site.

This sequence belongs to the class-II aminoacyl-tRNA synthetase family. Zn(2+) is required as a cofactor.

The protein resides in the cytoplasm. It carries out the reaction tRNA(Ala) + L-alanine + ATP = L-alanyl-tRNA(Ala) + AMP + diphosphate. Its function is as follows. Catalyzes the attachment of alanine to tRNA(Ala) in a two-step reaction: alanine is first activated by ATP to form Ala-AMP and then transferred to the acceptor end of tRNA(Ala). Also edits incorrectly charged Ser-tRNA(Ala) and Gly-tRNA(Ala) via its editing domain. The sequence is that of Alanine--tRNA ligase from Synechococcus sp. (strain CC9605).